The following is a 28-amino-acid chain: Cruzioseptin-3 (28 aa).

Position 25 is a glutamine amide (Q25). The propeptide occupies 27–28 (EQ).

As to expression, expressed by the skin glands.

The protein resides in the secreted. Its function is as follows. Has antimicrobial activity against Gram-negative bacterium E.coli (MIC=13.32 uM), against Gram-positive bacterium S.aureus (MIC=13.32 uM) and against fungus C.albicans (MIC=13.32 uM). At higher concentrations also has a bactericidal and fungicidal effect. Has hemagglutinating activity against horse erythrocytes. This Cruziohyla calcarifer (Splendid leaf frog) protein is Cruzioseptin-3.